Here is a 328-residue protein sequence, read N- to C-terminus: Malate dehydrogenase (328 aa).

12–18 serves as a coordination point for NAD(+); the sequence is GAAGQIG. Arg93 and Arg99 together coordinate substrate. NAD(+)-binding positions include Asn106, Gln113, and 130–132; that span reads VGN. The substrate site is built by Asn132 and Arg166. His191 (proton acceptor) is an active-site residue.

The protein belongs to the LDH/MDH superfamily. MDH type 2 family.

It catalyses the reaction (S)-malate + NAD(+) = oxaloacetate + NADH + H(+). Functionally, catalyzes the reversible oxidation of malate to oxaloacetate. The sequence is that of Malate dehydrogenase from Dechloromonas aromatica (strain RCB).